The primary structure comprises 599 residues: NADH-quinone oxidoreductase subunit C/D (599 aa).

The tract at residues 1–190 (MMIDQIAQES…DPFELTRQKE (190 aa)) is NADH dehydrogenase I subunit C. The NADH dehydrogenase I subunit D stretch occupies residues 214 to 599 (DFMFLNLGPN…IDFVMSDVDR (386 aa)).

The protein in the N-terminal section; belongs to the complex I 30 kDa subunit family. This sequence in the C-terminal section; belongs to the complex I 49 kDa subunit family. NDH-1 is composed of 13 different subunits. Subunits NuoB, CD, E, F, and G constitute the peripheral sector of the complex.

It localises to the cell inner membrane. It carries out the reaction a quinone + NADH + 5 H(+)(in) = a quinol + NAD(+) + 4 H(+)(out). Its function is as follows. NDH-1 shuttles electrons from NADH, via FMN and iron-sulfur (Fe-S) centers, to quinones in the respiratory chain. The immediate electron acceptor for the enzyme in this species is believed to be ubiquinone. Couples the redox reaction to proton translocation (for every two electrons transferred, four hydrogen ions are translocated across the cytoplasmic membrane), and thus conserves the redox energy in a proton gradient. The chain is NADH-quinone oxidoreductase subunit C/D from Photorhabdus laumondii subsp. laumondii (strain DSM 15139 / CIP 105565 / TT01) (Photorhabdus luminescens subsp. laumondii).